A 53-amino-acid chain; its full sequence is ATP synthase protein 8 (53 aa).

A helical membrane pass occupies residues 9–29; it reads WLILFFIFSITLVIFNILNYF.

Belongs to the ATPase protein 8 family. In terms of assembly, F-type ATPases have 2 components, CF(1) - the catalytic core - and CF(0) - the membrane proton channel.

The protein localises to the mitochondrion membrane. In terms of biological role, mitochondrial membrane ATP synthase (F(1)F(0) ATP synthase or Complex V) produces ATP from ADP in the presence of a proton gradient across the membrane which is generated by electron transport complexes of the respiratory chain. F-type ATPases consist of two structural domains, F(1) - containing the extramembraneous catalytic core and F(0) - containing the membrane proton channel, linked together by a central stalk and a peripheral stalk. During catalysis, ATP synthesis in the catalytic domain of F(1) is coupled via a rotary mechanism of the central stalk subunits to proton translocation. Part of the complex F(0) domain. Minor subunit located with subunit a in the membrane. The protein is ATP synthase protein 8 (mt:ATPase8) of Anopheles quadrimaculatus (Common malaria mosquito).